A 391-amino-acid chain; its full sequence is Serpin B13 (391 aa).

The protein belongs to the serpin family. Ov-serpin subfamily. Skin specific.

The protein resides in the cytoplasm. Functionally, may play a role in the proliferation or differentiation of keratinocytes. This is Serpin B13 (SERPINB13) from Homo sapiens (Human).